We begin with the raw amino-acid sequence, 814 residues long: Outer membrane usher protein SefC (814 aa).

The first 30 residues, 1–30 (MKKTTITLFVLTSVFHSGNVFSRQYNFDYG), serve as a signal peptide directing secretion. A disulfide bridge connects residues Cys792 and Cys813.

The protein belongs to the fimbrial export usher family.

It localises to the cell outer membrane. In terms of biological role, involved in the export and assembly of the SefA fimbrial subunit. This is Outer membrane usher protein SefC (sefC) from Salmonella enteritidis.